A 269-amino-acid chain; its full sequence is Eukaryotic translation initiation factor 3 subunit G (269 aa).

Positions 140–181 (AIGGGDMSAQGGSGSGRYVPPSLRAGARDPSSNAYQDQRERD) are disordered. Residues 141 to 154 (IGGGDMSAQGGSGS) show a composition bias toward gly residues. A Phosphoserine modification is found at Ser161. The RRM domain occupies 184–263 (KTIRLTQVNE…FMLHAEWSKP (80 aa)).

The protein belongs to the eIF-3 subunit G family. Component of the eukaryotic translation initiation factor 3 (eIF-3) complex.

The protein resides in the cytoplasm. Its function is as follows. RNA-binding component of the eukaryotic translation initiation factor 3 (eIF-3) complex, which is involved in protein synthesis of a specialized repertoire of mRNAs and, together with other initiation factors, stimulates binding of mRNA and methionyl-tRNAi to the 40S ribosome. The eIF-3 complex specifically targets and initiates translation of a subset of mRNAs involved in cell proliferation. This subunit can bind 18S rRNA. The sequence is that of Eukaryotic translation initiation factor 3 subunit G from Kluyveromyces lactis (strain ATCC 8585 / CBS 2359 / DSM 70799 / NBRC 1267 / NRRL Y-1140 / WM37) (Yeast).